Here is a 457-residue protein sequence, read N- to C-terminus: Cysteine--tRNA ligase (457 aa).

Position 27 (C27) interacts with Zn(2+). The 'HIGH' region signature appears at 29–39; it reads ITPQSEPHIGH. Residues C207, H232, and E236 each contribute to the Zn(2+) site. Residues 265 to 269 carry the 'KMSKS' region motif; that stretch reads KMSKS. K268 lines the ATP pocket.

It belongs to the class-I aminoacyl-tRNA synthetase family. As to quaternary structure, monomer. The cofactor is Zn(2+).

It localises to the cytoplasm. It carries out the reaction tRNA(Cys) + L-cysteine + ATP = L-cysteinyl-tRNA(Cys) + AMP + diphosphate. The protein is Cysteine--tRNA ligase of Dehalococcoides mccartyi (strain ATCC BAA-2100 / JCM 16839 / KCTC 5957 / BAV1).